A 436-amino-acid chain; its full sequence is Two-pore potassium channel 3 (436 aa).

The Cytoplasmic portion of the chain corresponds to 1–148 (MANEGSDPLL…QKDPTETSRS (148 aa)). The segment at 62–117 (SHFIDSMKQPSPSSSSTAVNNPFSDSSTLDPLLPPPPPQPEPWLSDQTSSHCQGHA) is disordered. Residues 71–92 (PSPSSSSTAVNNPFSDSSTLDP) show a composition bias toward low complexity. A compositionally biased stretch (pro residues) spans 93–102 (LLPPPPPQPE). The helical transmembrane segment at 149-169 (VVRQAFALLVVYLSLGVLIYW) threads the bilayer. The segment at residues 185–204 (DGLYFCIVTMCTIGYGDITP) is an intramembrane region (pore-forming). A helical membrane pass occupies residues 212–232 (FSIMFVLVGFGFIDILLSGMV). The Cytoplasmic portion of the chain corresponds to 233–274 (SYVLDLQESYMLDSAKRRDEPEKRRSYIIDVKKGRMRIRLKV). A helical membrane pass occupies residues 275–295 (ALALGVVVLCIAVGVGIMHFI). The segment at residues 302-321 (DSFYLSVMSVTTVGYGDRAF) is an intramembrane region (pore-forming). Residues 328–348 (LFAAIWLLVSTLAVARAFLYL) form a helical membrane-spanning segment. At 349–436 (AEARVDKRNR…LDLLEGGSGD (88 aa)) the chain is on the cytoplasmic side. EF-hand domains lie at 365–400 (LCET…EMEK) and 404–436 (KDIL…GSGD). Residues aspartate 378, aspartate 380, asparagine 382, cysteine 384, glutamate 389, aspartate 417, asparagine 421, lysine 423, and aspartate 428 each coordinate Ca(2+).

It belongs to the two pore domain potassium channel (TC 1.A.1.7) family. In terms of assembly, homodimer. Expressed in roots, cotyledons, stems, hypocotyls, leaves and flowers. Detected in root tips and in mesophyll cells and guard cells of the leaves.

The protein localises to the vacuole membrane. It is found in the plastid. It localises to the chloroplast thylakoid membrane. With respect to regulation, inhibited by barium, but not by tetraethylammonium. Its function is as follows. Two-pore potassium channel modulating the proton motive force (pmf) necessary to convert photochemical energy into physiological functions. Mediates the potassium efflux from the thylakoid lumen required for the regulation of the transmembrane electrical potential, the enhancement of the pH gradient for ATP synthesis, the regulation of electron flow, and pH-mediated photoprotective responses. Requires calcium for channel activity. The sequence is that of Two-pore potassium channel 3 from Arabidopsis thaliana (Mouse-ear cress).